The primary structure comprises 574 residues: Putative ABC transporter ATP-binding protein VVA0347 (574 aa).

2 ABC transporter domains span residues 3–244 and 299–533; these read IEFS…GIRE and LDVR…ANLT. ATP contacts are provided by residues 37–44 and 332–339; these read GPSGSGKS and GKNGSGKS.

It belongs to the ABC transporter superfamily.

It is found in the cell inner membrane. Its function is as follows. Probably part of an ABC transporter complex. Responsible for energy coupling to the transport system. This is Putative ABC transporter ATP-binding protein VVA0347 from Vibrio vulnificus (strain YJ016).